Consider the following 120-residue polypeptide: UPF0231 protein KPN78578_01240 (120 aa).

Belongs to the UPF0231 family.

This is UPF0231 protein KPN78578_01240 from Klebsiella pneumoniae subsp. pneumoniae (strain ATCC 700721 / MGH 78578).